Here is a 221-residue protein sequence, read N- to C-terminus: Ribonuclease T (221 aa).

The Exonuclease domain maps to 21–195 (VVIDIESAGF…YDTIQTAYLF (175 aa)). Asp-24, Glu-26, His-182, and Asp-187 together coordinate Mg(2+). The active-site Proton donor/acceptor is the His-182.

This sequence belongs to the RNase T family. Homodimer. Requires Mg(2+) as cofactor.

Trims short 3' overhangs of a variety of RNA species, leaving a one or two nucleotide 3' overhang. Responsible for the end-turnover of tRNA: specifically removes the terminal AMP residue from uncharged tRNA (tRNA-C-C-A). Also appears to be involved in tRNA biosynthesis. The sequence is that of Ribonuclease T from Buchnera aphidicola subsp. Cinara cedri (strain Cc).